We begin with the raw amino-acid sequence, 170 residues long: Photosystem I assembly protein Ycf3 (170 aa).

3 TPR repeats span residues 35–68, 72–105, and 120–153; these read AFTY…EIDP, SYIL…NPFL, and GEQA…TPGN.

It belongs to the Ycf3 family.

It is found in the plastid. The protein resides in the chloroplast thylakoid membrane. Essential for the assembly of the photosystem I (PSI) complex. May act as a chaperone-like factor to guide the assembly of the PSI subunits. This is Photosystem I assembly protein Ycf3 from Oryza nivara (Indian wild rice).